Reading from the N-terminus, the 354-residue chain is Abasic site processing protein HMCES (354 aa).

Cys-2 serves as the catalytic Nucleophile. Residue Cys-2 is modified to Thiazolidine linkage to a ring-opened DNA abasic site. Glu-127 is a catalytic residue. Residues Lys-148 and Lys-151 each participate in a glycyl lysine isopeptide (Lys-Gly) (interchain with G-Cter in SUMO2) cross-link. Position 160 is a phosphoserine (Ser-160). Lys-276 is covalently cross-linked (Glycyl lysine isopeptide (Lys-Gly) (interchain with G-Cter in SUMO2)). Residues 292–354 are disordered; the sequence is ATKSPKKEDS…EPVAKRPYSQ (63 aa). Residue Ser-295 is modified to Phosphoserine. The span at 296 to 309 shows a compositional bias: basic and acidic residues; the sequence is PKKEDSKTPQKEES. A Glycyl lysine isopeptide (Lys-Gly) (interchain with G-Cter in SUMO2) cross-link involves residue Lys-306. Ser-322 carries the phosphoserine modification. The PIP-box signature appears at 332 to 338; the sequence is GLLEQWL. Residues 337–348 are compositionally biased toward basic and acidic residues; sequence WLKREKEEEPVA. Glycyl lysine isopeptide (Lys-Gly) (interchain with G-Cter in SUMO2) cross-links involve residues Lys-339 and Lys-342.

This sequence belongs to the SOS response-associated peptidase family. In terms of assembly, interacts (via PIP-box motif) with PCNA. Post-translationally, ubiquitinated; the covalent HMCES DNA-protein cross-link is ubiquitinated, leading to its degradation by the proteasome.

It is found in the chromosome. With respect to regulation, formation and reversal of DNA-protein cross-link depends on DNA context. Catalyzes formation of the thiazolidine linkage in presence of abasic sites in single-stranded DNA. Mediates the reversal of the thiazolidine cross-link in presence of double stranded DNA. Its function is as follows. Sensor of abasic sites in single-stranded DNA (ssDNA) required to preserve genome integrity by promoting error-free repair of abasic sites. Acts as an enzyme that recognizes and binds abasic sites in ssDNA at replication forks and chemically modifies the lesion by forming a covalent cross-link with DNA: forms a stable thiazolidine linkage between a ring-opened abasic site and the alpha-amino and sulfhydryl substituents of its N-terminal catalytic cysteine residue. Promotes error-free repair by protecting abasic sites from translesion synthesis (TLS) polymerases and endonucleases that are error-prone and would generate mutations and double-strand breaks. The HMCES DNA-protein cross-link is then either reversed or degraded. HMCES is able to catalyze the reversal of its thiazolidine cross-link and cycle between a cross-link and a non-cross-linked state depending on DNA context: mediates self-reversal of the thiazolidine cross-link in double stranded DNA, allowing APEX1 to initiate downstream repair of abasic sites. The HMCES DNA-protein cross-link can also be degraded by the SPRTN metalloprotease following unfolding by the BRIP1/FANCJ helicase. Has preference for ssDNA, but can also accommodate double-stranded DNA with 3' or 5' overhang (dsDNA), and dsDNA-ssDNA 3' junction. Plays a protective role during somatic hypermutation of immunoglobulin genes in B-cells: acts via its ability to form covalent cross-links with abasic sites, thereby limiting the accumulation of deletions in somatic hypermutation target regions. Also involved in class switch recombination (CSR) in B-cells independently of the formation of a DNA-protein cross-link: acts by binding and protecting ssDNA overhangs to promote DNA double-strand break repair through the microhomology-mediated alternative-end-joining (Alt-EJ) pathway. Acts as a protease: mediates autocatalytic processing of its N-terminal methionine in order to expose the catalytic cysteine. The protein is Abasic site processing protein HMCES of Pongo abelii (Sumatran orangutan).